Reading from the N-terminus, the 452-residue chain is Maltoporin (452 aa).

The first 25 residues, 1–25, serve as a signal peptide directing secretion; that stretch reads MMITLRKLPLAVAVAAGVMSAQAMA.

This sequence belongs to the porin LamB (TC 1.B.3) family. In terms of assembly, homotrimer formed of three 18-stranded antiparallel beta-barrels, containing three independent channels.

The protein localises to the cell outer membrane. The enzyme catalyses beta-maltose(in) = beta-maltose(out). In terms of biological role, involved in the transport of maltose and maltodextrins. The protein is Maltoporin of Salmonella agona (strain SL483).